The following is a 37-amino-acid chain: Large ribosomal subunit protein bL36 (37 aa).

Belongs to the bacterial ribosomal protein bL36 family.

The protein is Large ribosomal subunit protein bL36 of Aromatoleum aromaticum (strain DSM 19018 / LMG 30748 / EbN1) (Azoarcus sp. (strain EbN1)).